A 342-amino-acid polypeptide reads, in one-letter code: Large ribosomal subunit protein uL3 (342 aa).

Belongs to the universal ribosomal protein uL3 family. As to quaternary structure, part of the 50S ribosomal subunit. Forms a cluster with proteins L14 and L24e.

In terms of biological role, one of the primary rRNA binding proteins, it binds directly near the 3'-end of the 23S rRNA, where it nucleates assembly of the 50S subunit. The protein is Large ribosomal subunit protein uL3 of Pyrobaculum islandicum (strain DSM 4184 / JCM 9189 / GEO3).